Here is a 205-residue protein sequence, read N- to C-terminus: MGDPKLPRRMWRKPKRPFNYDLKMEELRTLGTFGLRTKRELWKAHTELSRVRNQARSLLALGQEVRERKEPVLLRSLARIGLVGKDASLDDVLNLQVNDLLGRRLQTIVMKKLGFSTPYQARQAVVHGHITISDRVVTIPSYTVYVEEEGDIKLTGGSAFATILEKSKRAEAAAREAAAEAAEAEQAAAQAAAPTPAPAAAAPKQ.

An S4 RNA-binding domain is found at Arg103–Ala173. The tract at residues Ala174 to Gln205 is disordered. Residues Ala179–Gln205 show a composition bias toward low complexity.

The protein belongs to the universal ribosomal protein uS4 family. Part of the 30S ribosomal subunit. Contacts protein S5. The interaction surface between S4 and S5 is involved in control of translational fidelity.

In terms of biological role, one of the primary rRNA binding proteins, it binds directly to 16S rRNA where it nucleates assembly of the body of the 30S subunit. Its function is as follows. With S5 and S12 plays an important role in translational accuracy. The sequence is that of Small ribosomal subunit protein uS4 from Cenarchaeum symbiosum (strain A).